A 668-amino-acid chain; its full sequence is tRNA 5-methylaminomethyl-2-thiouridine biosynthesis bifunctional protein MnmC (668 aa).

The interval 1–245 (MKHYSIQPAN…KREMLCGVME (245 aa)) is tRNA (mnm(5)s(2)U34)-methyltransferase. The interval 270 to 668 (IGGGIASALL…LLKGKAVKAG (399 aa)) is FAD-dependent cmnm(5)s(2)U34 oxidoreductase.

The protein in the N-terminal section; belongs to the methyltransferase superfamily. tRNA (mnm(5)s(2)U34)-methyltransferase family. In the C-terminal section; belongs to the DAO family. It depends on FAD as a cofactor.

The protein localises to the cytoplasm. It catalyses the reaction 5-aminomethyl-2-thiouridine(34) in tRNA + S-adenosyl-L-methionine = 5-methylaminomethyl-2-thiouridine(34) in tRNA + S-adenosyl-L-homocysteine + H(+). Functionally, catalyzes the last two steps in the biosynthesis of 5-methylaminomethyl-2-thiouridine (mnm(5)s(2)U) at the wobble position (U34) in tRNA. Catalyzes the FAD-dependent demodification of cmnm(5)s(2)U34 to nm(5)s(2)U34, followed by the transfer of a methyl group from S-adenosyl-L-methionine to nm(5)s(2)U34, to form mnm(5)s(2)U34. The polypeptide is tRNA 5-methylaminomethyl-2-thiouridine biosynthesis bifunctional protein MnmC (Escherichia coli (strain K12 / DH10B)).